The chain runs to 90 residues: MAHKKAGGSSRNGRDSAGKRLGIKAYGGERVIPGNIIARQRGTTWHPGLNVGMGTDHTLFAKVEGHVEFRAKANGRTFVSVLPIAVAAAE.

Positions Met-1–Arg-20 are disordered.

The protein belongs to the bacterial ribosomal protein bL27 family.

The sequence is that of Large ribosomal subunit protein bL27 from Rhodopseudomonas palustris (strain BisB18).